The sequence spans 936 residues: Protein translocase subunit SecA (936 aa).

ATP-binding positions include Q87, 105–109, and D515; that span reads GEGKT. Positions 920, 922, 931, and 932 each coordinate Zn(2+).

It belongs to the SecA family. As to quaternary structure, monomer and homodimer. Part of the essential Sec protein translocation apparatus which comprises SecA, SecYEG and auxiliary proteins SecDF-YajC and YidC. Zn(2+) serves as cofactor.

It is found in the cell inner membrane. Its subcellular location is the cytoplasm. It catalyses the reaction ATP + H2O + cellular proteinSide 1 = ADP + phosphate + cellular proteinSide 2.. Part of the Sec protein translocase complex. Interacts with the SecYEG preprotein conducting channel. Has a central role in coupling the hydrolysis of ATP to the transfer of proteins into and across the cell membrane, serving both as a receptor for the preprotein-SecB complex and as an ATP-driven molecular motor driving the stepwise translocation of polypeptide chains across the membrane. The sequence is that of Protein translocase subunit SecA from Paraburkholderia phymatum (strain DSM 17167 / CIP 108236 / LMG 21445 / STM815) (Burkholderia phymatum).